The primary structure comprises 335 residues: Karyogamy protein KAR4 (335 aa).

The interval 1 to 25 (MAFQDPTYDQNKSRHINNSHLQGPN) is disordered. Polar residues predominate over residues 16–25 (INNSHLQGPN).

Belongs to the MT-A70-like family. Component of the MIS (mRNA N6-methyladenosine (m6A) methylation) complex, at least composed of IME4, KAR4, MUM2, SLZ1, and VIR1. Interacts with VIR1.

The protein resides in the nucleus. The protein localises to the cytoplasm. Functionally, component of the MIS complex, a complex that mediates N6-methyladenosine (m6A) methylation of meiotic mRNAs and is required for initiation of meiosis, progression through the meiotic divisions and sporulation. May assist STE12 in the pheromone-dependent expression of KAR3 and CIK1. The protein is Karyogamy protein KAR4 (KAR4) of Saccharomyces cerevisiae (strain ATCC 204508 / S288c) (Baker's yeast).